The sequence spans 84 residues: Cytochrome b559 subunit alpha (84 aa).

The chain crosses the membrane as a helical span at residues 21 to 35; the sequence is VIHSITIPSLFIAGW. H23 serves as a coordination point for heme.

The protein belongs to the PsbE/PsbF family. As to quaternary structure, heterodimer of an alpha subunit and a beta subunit. PSII is composed of 1 copy each of membrane proteins PsbA, PsbB, PsbC, PsbD, PsbE, PsbF, PsbH, PsbI, PsbJ, PsbK, PsbL, PsbM, PsbT, PsbX, PsbY, PsbZ, Psb30/Ycf12, at least 3 peripheral proteins of the oxygen-evolving complex and a large number of cofactors. It forms dimeric complexes. Heme b serves as cofactor.

The protein localises to the plastid membrane. Functionally, this b-type cytochrome is tightly associated with the reaction center of photosystem II (PSII). PSII is a light-driven water:plastoquinone oxidoreductase that uses light energy to abstract electrons from H(2)O, generating O(2) and a proton gradient subsequently used for ATP formation. It consists of a core antenna complex that captures photons, and an electron transfer chain that converts photonic excitation into a charge separation. The polypeptide is Cytochrome b559 subunit alpha (Cuscuta gronovii (Common dodder)).